Consider the following 374-residue polypeptide: All-trans-retinol dehydrogenase [NAD(+)] ADH7 (374 aa).

Positions 47, 68, 98, 101, 104, 112, and 174 each coordinate Zn(2+). NAD(+)-binding positions include 199–204 (GLGGVG), aspartate 223, lysine 228, 292–294 (VGA), and arginine 369.

This sequence belongs to the zinc-containing alcohol dehydrogenase family. Class-IV subfamily. Homodimer. Requires Zn(2+) as cofactor. In terms of tissue distribution, high expression in the stomach mucosa. Lower expression in eye, thymus, skin and ovary. Very low expression in small intestine, liver and uterus.

It is found in the cytoplasm. It carries out the reaction a primary alcohol + NAD(+) = an aldehyde + NADH + H(+). The enzyme catalyses 10-hydroxydecanoate + NAD(+) = 10-oxodecanoate + NADH + H(+). It catalyses the reaction all-trans-retinol + NAD(+) = all-trans-retinal + NADH + H(+). The catalysed reaction is 9-cis-retinol + NAD(+) = 9-cis-retinal + NADH + H(+). It carries out the reaction all-trans-3,4-didehydroretinol + NAD(+) = all-trans-3,4-didehydroretinal + NADH + H(+). The enzyme catalyses all-trans-4-hydroxyretinol + NAD(+) = all-trans-4-hydroxyretinal + NADH + H(+). It catalyses the reaction all-trans-4-oxoretinol + NAD(+) = all-trans-4-oxoretinal + NADH + H(+). The catalysed reaction is 12-hydroxydodecanoate + NAD(+) = 12-oxododecanoate + NADH + H(+). It carries out the reaction 16-hydroxyhexadecanoate + NAD(+) = 16-oxohexadecanoate + NADH + H(+). The enzyme catalyses hexan-1-ol + NAD(+) = hexanal + NADH + H(+). It catalyses the reaction (E)-hex-2-en-1-ol + NAD(+) = (E)-hex-2-enal + NADH + H(+). The catalysed reaction is (E)-4-hydroxynon-2-en-1-ol + NAD(+) = (E)-4-hydroxynon-2-enal + NADH + H(+). Retinol oxidation is inhibited by the detergent Tween 80. Ethanol inhibits both all-trans-retinol and 9-cis-retinol oxidation. 13-cis-retinol is an effective competitive inhibitor of the 9-cis-retinol oxidation. All-trans-retinoic acid is a powerful inhibitor of all-trans-retinol oxidation. 13-cis-retinoic acid is a powerful inhibitor of all-trans-retinol oxidation. Cimetidine competitively inhibited ethanol oxidation. In terms of biological role, catalyzes the NAD-dependent oxidation of all-trans-retinol, alcohol, aldehyde and omega-hydroxy fatty acids and their derivatives. Oxidizes preferentially all trans-retinol, all-trans-4-hydroxyretinol, 9-cis-retinol, 2-hexenol, and long chain omega-hydroxy fatty acids such as juniperic acid. In vitro can also catalyze the NADH-dependent reduction of all-trans-retinal and aldehydes and their derivatives. Reduces preferentially all trans-retinal, all-trans-4-oxoretinal and hexanal. Catalyzes in the oxidative direction with higher efficiency. Therefore may participate in retinoid metabolism, fatty acid omega-oxidation, and elimination of cytotoxic aldehydes produced by lipid peroxidation. The polypeptide is All-trans-retinol dehydrogenase [NAD(+)] ADH7 (Adh7) (Mus musculus (Mouse)).